Reading from the N-terminus, the 303-residue chain is 2-dehydropantoate 2-reductase (303 aa).

NADP(+)-binding positions include 7–12 (GCGALG), asparagine 98, and alanine 122. Asparagine 98 is a substrate binding site. Catalysis depends on lysine 176, which acts as the Proton donor. Asparagine 180, asparagine 184, asparagine 194, and serine 244 together coordinate substrate. Glutamate 256 lines the NADP(+) pocket.

This sequence belongs to the ketopantoate reductase family.

The protein localises to the cytoplasm. It carries out the reaction (R)-pantoate + NADP(+) = 2-dehydropantoate + NADPH + H(+). It functions in the pathway cofactor biosynthesis; (R)-pantothenate biosynthesis; (R)-pantoate from 3-methyl-2-oxobutanoate: step 2/2. Catalyzes the NADPH-dependent reduction of ketopantoate into pantoic acid. This Yersinia pestis protein is 2-dehydropantoate 2-reductase (panE).